A 231-amino-acid chain; its full sequence is Chlorophyll a-b binding protein 1B-20, chloroplastic (231 aa).

The tract at residues 1–25 (RIQAYRFRTRVPPSPAASGSPRSTR) is disordered. A chloroplast-targeting transit peptide spans 1–31 (RIQAYRFRTRVPPSPAASGSPRSTRRDVAVQ). Residue tryptophan 36 participates in chlorophyll b binding. Phenylalanine 56 lines the chlorophyll a pocket. Chlorophyll b-binding residues include arginine 80, serine 118, glutamate 133, and arginine 136. The chlorophyll a site is built by lysine 182, glutamate 183, asparagine 186, arginine 188, glutamine 200, and histidine 215. A helical membrane pass occupies residues 183–199 (ELANGRLAMLAFLGFLV).

This sequence belongs to the light-harvesting chlorophyll a/b-binding (LHC) protein family. As to quaternary structure, the LHC complex consists of chlorophyll a-b binding proteins. The cofactor is Binds at least 14 chlorophylls (8 Chl-a and 6 Chl-b) and carotenoids such as lutein and neoxanthin.. Post-translationally, photoregulated by reversible phosphorylation of its threonine residues.

It localises to the plastid. Its subcellular location is the chloroplast thylakoid membrane. Its function is as follows. The light-harvesting complex (LHC) functions as a light receptor, it captures and delivers excitation energy to photosystems with which it is closely associated. This is Chlorophyll a-b binding protein 1B-20, chloroplastic (LHC Ib-20) from Hordeum vulgare (Barley).